The sequence spans 467 residues: Interleukin-6 receptor subunit alpha (467 aa).

Positions 1–19 are cleaved as a signal peptide; it reads MLAVGCALLTALLAAPGMA. Residues 20-112 form the Ig-like C2-type domain; sequence LAPRGCSKLE…AGSVRLLVDA (93 aa). Residues 20–365 lie on the Extracellular side of the membrane; the sequence is LAPRGCSKLE…VQDSASVPLP (346 aa). Intrachain disulfides connect Cys-25/Cys-193, Cys-47/Cys-96, Cys-121/Cys-132, and Cys-165/Cys-176. N-linked (GlcNAc...) asparagine glycans are attached at residues Asn-55 and Asn-93. Fibronectin type-III domains are found at residues 113–217 and 218–316; these read PPEE…LQPD and PPVN…IPWT. Residues Asn-221 and Asn-245 are each glycosylated (N-linked (GlcNAc...) asparagine). The WSXWS motif signature appears at 303–307; sequence WSEWS. The segment at 315-357 is disordered; sequence WTESRSSPAETELPLSTQAPTTNEDDEDISSKESANATSLPVQ. Composition is skewed to polar residues over residues 317–336 and 346–357; these read ESRS…APTT and KESANATSLPVQ. The N-linked (GlcNAc...) asparagine glycan is linked to Asn-350. O-linked (GlcNAc) threonine glycosylation is present at Thr-352. A helical membrane pass occupies residues 366 to 386; that stretch reads TFLVAGGSLAFGTLLCIGIIL. Residues 387–467 are Cytoplasmic-facing; sequence RFKKTGQLQA…VSNRDYFFPR (81 aa). The interval 428 to 467 is disordered; sequence ISPPVSPNSLGDNTSRNSRPEARGPQSPYDVSNRDYFFPR.

This sequence belongs to the type I cytokine receptor family. Type 3 subfamily. Component of a hexamer of two molecules each of IL6, IL6R and IL6ST; first binds to IL6 to associate with the signaling subunit IL6ST. Interacts (via N-terminal ectodomain) with SORL1; this interaction may affect IL6-binding to IL6R, hence decrease IL6 'classic-signaling'. As to quaternary structure, also interacts with SORL1; this interaction leads to soluble IL6R internalization. May form a trimeric complex with the soluble SORL1 ectodomain and circulating IL6 receptor; this interaction might stabilize circulating IL6, hence promote IL6 'trans-signaling'. A short soluble form is also released from the membrane by proteolysis. The sIL6R is formed by limited proteolysis of membrane-bound receptors, a process referred to as ectodomain shedding. mIL6R is cleaved by the proteases ADAM10 and ADAM17. Post-translationally, glycosylated. Glycosylation is dispensable for transport, signaling, and cell-surface turnover. Glycosylation at Asn-55 is a protease-regulatory exosite. Glycosylation is required for ADAM17-mediated proteolysis. In terms of tissue distribution, expressed in liver.

The protein localises to the cell membrane. The protein resides in the secreted. Classic and trans-signaling are both inhibited by tocilizumab, a humanized monoclonal antibody that blocks interleukin IL6R signaling. In terms of biological role, part of the receptor for interleukin 6. Binds to IL6 with low affinity, but does not transduce a signal. Signal activation necessitate an association with IL6ST. Activation leads to the regulation of the immune response, acute-phase reactions and hematopoiesis. The interaction with membrane-bound IL6R and IL6ST stimulates 'classic signaling', the restricted expression of the IL6R limits classic IL6 signaling to only a few tissues such as the liver and some cells of the immune system. Whereas the binding of IL6 and soluble IL6R to IL6ST stimulates 'trans-signaling'. Alternatively, 'cluster signaling' occurs when membrane-bound IL6:IL6R complexes on transmitter cells activate IL6ST receptors on neighboring receiver cells. Its function is as follows. Signaling via the membrane-bound IL6R is mostly regenerative and anti-inflammatory. Drives naive CD4(+) T cells to the Th17 lineage, through 'cluster signaling' by dendritic cells. Functionally, soluble form of IL6 receptor (sIL6R) that acts as an agonist of IL6 activity. The IL6:sIL6R complex (hyper-IL6) binds to IL6ST/gp130 on cell surfaces and induces signaling also on cells that do not express membrane-bound IL6R in a process called IL6 'trans-signaling'. sIL6R is causative for the pro-inflammatory properties of IL6 and an important player in the development of chronic inflammatory diseases. In complex with IL6, is required for induction of VEGF production. Plays a protective role during liver injury, being required for maintenance of tissue regeneration. 'Trans-signaling' in central nervous system regulates energy and glucose homeostasis. The polypeptide is Interleukin-6 receptor subunit alpha (IL6R) (Sus scrofa (Pig)).